We begin with the raw amino-acid sequence, 263 residues long: Undecaprenyl-diphosphatase 2 (263 aa).

Transmembrane regions (helical) follow at residues 15–37 (GLTE…LIGF), 42–62 (AKVF…VIFW), 79–99 (SLNL…GVLF), 107–127 (LFGP…MIVA), 142–162 (ITYK…WPGF), 183–203 (AEYT…LDLI), 216–236 (LFVT…VSFL), and 242–262 (VKLT…YFFI).

It belongs to the UppP family.

It localises to the cell membrane. The enzyme catalyses di-trans,octa-cis-undecaprenyl diphosphate + H2O = di-trans,octa-cis-undecaprenyl phosphate + phosphate + H(+). Its function is as follows. Catalyzes the dephosphorylation of undecaprenyl diphosphate (UPP). Confers resistance to bacitracin. The protein is Undecaprenyl-diphosphatase 2 of Bacillus cereus (strain ATCC 14579 / DSM 31 / CCUG 7414 / JCM 2152 / NBRC 15305 / NCIMB 9373 / NCTC 2599 / NRRL B-3711).